A 65-amino-acid chain; its full sequence is Large ribosomal subunit protein bL31 (65 aa).

Zn(2+)-binding residues include Cys-16, Cys-18, Cys-36, and Cys-39.

The protein belongs to the bacterial ribosomal protein bL31 family. Type A subfamily. Part of the 50S ribosomal subunit. It depends on Zn(2+) as a cofactor.

In terms of biological role, binds the 23S rRNA. The protein is Large ribosomal subunit protein bL31 of Carboxydothermus hydrogenoformans (strain ATCC BAA-161 / DSM 6008 / Z-2901).